Consider the following 902-residue polypeptide: Probable polyribonucleotide nucleotidyltransferase 1, chloroplastic (902 aa).

Residues 1-66 constitute a chloroplast transit peptide; sequence MLATPGALHH…RRRAAGARVR (66 aa). Over residues 44–53 the composition is skewed to low complexity; that stretch reads VAASASTSRR. The segment at 44 to 93 is disordered; the sequence is VAASASTSRRGGARRRAAGARVRASVGEEAPPVVTEEASTSGGPTKFSTK. Residues 80–91 are compositionally biased toward polar residues; sequence EASTSGGPTKFS. A KH domain is found at 693 to 753; the sequence is PLIHVMKVKP…SSLEKSKAII (61 aa). Residues 763 to 832 form the S1 motif domain; sequence GEIYRNCEIK…DKGQLRLSSR (70 aa). The tract at residues 833–902 is disordered; it reads ALLPDANQES…ASQGSEMGTE (70 aa). The span at 839–850 shows a compositional bias: polar residues; sequence NQESSSKQQAGG. A compositionally biased stretch (basic and acidic residues) spans 852–862; it reads TREKAPQKDNL. Positions 877–888 are enriched in low complexity; that stretch reads EASTAENNATAS.

Belongs to the polyribonucleotide nucleotidyltransferase family.

The protein resides in the plastid. It localises to the chloroplast. It catalyses the reaction RNA(n+1) + phosphate = RNA(n) + a ribonucleoside 5'-diphosphate. Involved in the metabolism of all major classes of plastid RNAs. Required for efficient 3'-end processing of mRNAs and 3'-end maturation of rRNA transcripts, but is not sufficient to mediate their degradation. Mediates tRNA degradation. May function as a poly(A) mRNA 3'-5' degrading phosphorylase. The sequence is that of Probable polyribonucleotide nucleotidyltransferase 1, chloroplastic (PNP1) from Oryza sativa subsp. japonica (Rice).